Here is a 208-residue protein sequence, read N- to C-terminus: dITP/XTP pyrophosphatase (208 aa).

17–22 (SNNPGK) provides a ligand contact to substrate. Residues aspartate 49 and aspartate 78 each contribute to the Mg(2+) site. Aspartate 78 acts as the Proton acceptor in catalysis. Substrate is bound by residues serine 79, 164–167 (FGYD), lysine 187, and 192–193 (HR).

Belongs to the HAM1 NTPase family. Homodimer. It depends on Mg(2+) as a cofactor.

It carries out the reaction XTP + H2O = XMP + diphosphate + H(+). The catalysed reaction is dITP + H2O = dIMP + diphosphate + H(+). It catalyses the reaction ITP + H2O = IMP + diphosphate + H(+). Functionally, pyrophosphatase that catalyzes the hydrolysis of nucleoside triphosphates to their monophosphate derivatives, with a high preference for the non-canonical purine nucleotides XTP (xanthosine triphosphate), dITP (deoxyinosine triphosphate) and ITP. Seems to function as a house-cleaning enzyme that removes non-canonical purine nucleotides from the nucleotide pool, thus preventing their incorporation into DNA/RNA and avoiding chromosomal lesions. The protein is dITP/XTP pyrophosphatase of Burkholderia pseudomallei (strain K96243).